The sequence spans 394 residues: Flap endonuclease 1-A (394 aa).

The interval 1–105 (MGIKGLTKLI…RELAKRFARR (105 aa)) is N-domain. Aspartate 34 is a Mg(2+) binding site. Arginine 71 lines the DNA pocket. The Mg(2+) site is built by aspartate 87, glutamate 159, glutamate 161, aspartate 180, and aspartate 182. The interval 123–254 (DVEKYSKKTV…QTALKMIRQH (132 aa)) is I-domain. Glutamate 159 is a binding site for DNA. Glycine 232 and aspartate 234 together coordinate DNA. Position 234 (aspartate 234) interacts with Mg(2+). Residues 338 to 346 (SQGRLESFF) form an interaction with PCNA region. The tract at residues 343-394 (ESFFGVSSSSSNKRKEAPDSEASAGKQVKTAAAVKPAKAASKKGPAKGGKKK) is disordered. Over residues 368–381 (KQVKTAAAVKPAKA) the composition is skewed to low complexity. Basic residues predominate over residues 382-394 (ASKKGPAKGGKKK).

Belongs to the XPG/RAD2 endonuclease family. FEN1 subfamily. Interacts with PCNA. Three molecules of FEN1 bind to one PCNA trimer with each molecule binding to one PCNA monomer. PCNA stimulates the nuclease activity without altering cleavage specificity. Mg(2+) is required as a cofactor. In terms of processing, phosphorylated. Phosphorylation upon DNA damage induces relocalization to the nuclear plasma.

The protein localises to the nucleus. It is found in the nucleolus. Its subcellular location is the nucleoplasm. It localises to the mitochondrion. Functionally, structure-specific nuclease with 5'-flap endonuclease and 5'-3' exonuclease activities involved in DNA replication and repair. During DNA replication, cleaves the 5'-overhanging flap structure that is generated by displacement synthesis when DNA polymerase encounters the 5'-end of a downstream Okazaki fragment. It enters the flap from the 5'-end and then tracks to cleave the flap base, leaving a nick for ligation. Also involved in the long patch base excision repair (LP-BER) pathway, by cleaving within the apurinic/apyrimidinic (AP) site-terminated flap. Acts as a genome stabilization factor that prevents flaps from equilibrating into structures that lead to duplications and deletions. Also possesses 5'-3' exonuclease activity on nicked or gapped double-stranded DNA, and exhibits RNase H activity. Also involved in replication and repair of rDNA and in repairing mitochondrial DNA. The protein is Flap endonuclease 1-A of Physcomitrium patens (Spreading-leaved earth moss).